We begin with the raw amino-acid sequence, 350 residues long: GTPase Obg (350 aa).

One can recognise an Obg domain in the interval 1 to 175; that stretch reads MFVDNIRIFA…GVFFMELRRI (175 aa). The OBG-type G domain maps to 176–345; sequence ADAGLVGYPN…LRNRLDELVG (170 aa). GTP-binding positions include 182 to 189, 207 to 211, 229 to 232, 299 to 302, and 326 to 328; these read GYPNAGKS, FTTLQ, DIPG, NKMD, and SAL. 2 residues coordinate Mg(2+): serine 189 and threonine 209.

It belongs to the TRAFAC class OBG-HflX-like GTPase superfamily. OBG GTPase family. In terms of assembly, monomer. The cofactor is Mg(2+).

The protein localises to the cytoplasm. In terms of biological role, an essential GTPase which binds GTP, GDP and possibly (p)ppGpp with moderate affinity, with high nucleotide exchange rates and a fairly low GTP hydrolysis rate. Plays a role in control of the cell cycle, stress response, ribosome biogenesis and in those bacteria that undergo differentiation, in morphogenesis control. The chain is GTPase Obg from Akkermansia muciniphila (strain ATCC BAA-835 / DSM 22959 / JCM 33894 / BCRC 81048 / CCUG 64013 / CIP 107961 / Muc).